A 303-amino-acid chain; its full sequence is UDP-3-O-acyl-N-acetylglucosamine deacetylase (303 aa).

His78, His237, and Asp241 together coordinate Zn(2+). The active-site Proton donor is the His264.

It belongs to the LpxC family. Requires Zn(2+) as cofactor.

It catalyses the reaction a UDP-3-O-[(3R)-3-hydroxyacyl]-N-acetyl-alpha-D-glucosamine + H2O = a UDP-3-O-[(3R)-3-hydroxyacyl]-alpha-D-glucosamine + acetate. It functions in the pathway glycolipid biosynthesis; lipid IV(A) biosynthesis; lipid IV(A) from (3R)-3-hydroxytetradecanoyl-[acyl-carrier-protein] and UDP-N-acetyl-alpha-D-glucosamine: step 2/6. In terms of biological role, catalyzes the hydrolysis of UDP-3-O-myristoyl-N-acetylglucosamine to form UDP-3-O-myristoylglucosamine and acetate, the committed step in lipid A biosynthesis. The protein is UDP-3-O-acyl-N-acetylglucosamine deacetylase of Azotobacter vinelandii (strain DJ / ATCC BAA-1303).